Reading from the N-terminus, the 353-residue chain is Interferon-stimulated 20 kDa exonuclease-like 2 (353 aa).

Disordered regions lie at residues 1–93 (MSTL…QPLD) and 125–172 (ALPK…SGAS). Basic and acidic residues predominate over residues 14–23 (PPKKALEGNA). The segment covering 24–35 (KHRNFVKKRRLL) has biased composition (basic residues). Residues 54 to 63 (LHSEPSKKGE) are compositionally biased toward basic and acidic residues. The span at 135–151 (RSQKKSSQKKSSKKNHP) shows a compositional bias: basic residues. Polar residues predominate over residues 152–172 (QKNAPQNSTQAHSENKCSGAS). Positions 178-353 (KMVAIDCEMV…EHLARNPPTD (176 aa)) constitute an Exonuclease domain.

Its subcellular location is the nucleus. The protein resides in the nucleolus. In terms of biological role, 3'-&gt; 5'-exoribonuclease involved in ribosome biogenesis in the processing of the 12S pre-rRNA. Displays a strong specificity for a 3'-end containing a free hydroxyl group. The sequence is that of Interferon-stimulated 20 kDa exonuclease-like 2 (ISG20L2) from Homo sapiens (Human).